A 34-amino-acid chain; its full sequence is Photosystem II reaction center protein M (34 aa).

Residues 6–26 (LGAIATALFVFIPCVFLILLY) traverse the membrane as a helical segment.

The protein belongs to the PsbM family. PSII is composed of 1 copy each of membrane proteins PsbA, PsbB, PsbC, PsbD, PsbE, PsbF, PsbH, PsbI, PsbJ, PsbK, PsbL, PsbM, PsbT, PsbX, PsbY, PsbZ, Psb30/Ycf12, peripheral proteins PsbO, CyanoQ (PsbQ), PsbU, PsbV and a large number of cofactors. It forms dimeric complexes.

It localises to the cellular thylakoid membrane. In terms of biological role, one of the components of the core complex of photosystem II (PSII). PSII is a light-driven water:plastoquinone oxidoreductase that uses light energy to abstract electrons from H(2)O, generating O(2) and a proton gradient subsequently used for ATP formation. It consists of a core antenna complex that captures photons, and an electron transfer chain that converts photonic excitation into a charge separation. This subunit is found at the monomer-monomer interface. The sequence is that of Photosystem II reaction center protein M from Acaryochloris marina (strain MBIC 11017).